The chain runs to 599 residues: MNQNARPHIEKILANLTQLPGVYKMLGKEGELLYVGKAKNLKNRVSSYFVKTIEHPKTQALVARIYDIETLVTRSETEALLLEQNLIKQHRPPYNIMLRDDKSYVYIFVSADKPYPRIASGRGKGKHQIGKFFGPYPSAYSARDTLLVLQKLFNVRQCENSYFSQRKRPCLQYQIKRCSAPCVGLVSPEDYKEDVNNSIRFLQGDTKELNQELIAKMEQAAADLEFEKAVFYRDRLSLLREVQAQQAVFKVKGEADILAITYQAGVTCVQIMHVRNGRMLGGKSYFPDMLGDDLGQMLSDFMANFYFQVADEVPSELIVNTALPDRKELEEALAQQFGKKVQIKSSVRETRAEWLELAEMNVQHAIKGQLSNHLELNERFHQLEQVVGRPIDRIECFDISHTMGEAPIASCVVFDQGGARKRDYRQFAIQDITAGDDYAAMRQALTRRYKKAMLPDLLLIDGGKGQLHMAMEVMQELGLEAFMVGVSKGEGRKPGLETLHFTDGTKIQLPEDSKALHLIQQVRDEAHRFAITKHRAKRDKRRSTSVLEAIPGLGPKRRRDLLTHFGGIQGVLKASEKELTVVPGLGEVMARTIYKILHE.

Positions 18–96 (QLPGVYKMLG…IKQHRPPYNI (79 aa)) constitute a GIY-YIG domain. The UVR domain maps to 207–242 (KELNQELIAKMEQAAADLEFEKAVFYRDRLSLLREV).

This sequence belongs to the UvrC family. As to quaternary structure, interacts with UvrB in an incision complex.

It localises to the cytoplasm. The UvrABC repair system catalyzes the recognition and processing of DNA lesions. UvrC both incises the 5' and 3' sides of the lesion. The N-terminal half is responsible for the 3' incision and the C-terminal half is responsible for the 5' incision. This is UvrABC system protein C from Acinetobacter baumannii (strain SDF).